The chain runs to 423 residues: Glutaminase (423 aa).

A glutaminase region spans residues 27–312 (GEVAQYIPQL…LSEDMGLHLM (286 aa)). Residues S69, N119, E165, N172, Y196, Y248, and V266 each coordinate substrate. Positions 321 to 423 (AVRAIEERGD…SPQVDDPEEL (103 aa)) constitute an STAS domain.

It belongs to the glutaminase family. As to quaternary structure, homotetramer.

The catalysed reaction is L-glutamine + H2O = L-glutamate + NH4(+). This is Glutaminase (glsA) from Corynebacterium efficiens (strain DSM 44549 / YS-314 / AJ 12310 / JCM 11189 / NBRC 100395).